Reading from the N-terminus, the 654-residue chain is Beta-mannosyltransferase 2 (654 aa).

Residues 1-37 (MLAWLRHRIRSYNTSTYSSILPSASFGKVYKIGTKLN) lie on the Cytoplasmic side of the membrane. Residues 38–58 (FTLLALCLLLACSVFFNYFYL) form a helical membrane-spanning segment. The Extracellular segment spans residues 59–654 (ADNNGLDIDT…ANGNGKGSSS (596 aa)).

This sequence belongs to the BMT family.

It localises to the membrane. Beta-mannosyltransferase involved in cell wall biosynthesis. Required for the addition of beta-mannose to the acid-labile fraction of cell wall phosphopeptidomannan. This Candida albicans (strain SC5314 / ATCC MYA-2876) (Yeast) protein is Beta-mannosyltransferase 2 (RHD1).